Here is a 147-residue protein sequence, read N- to C-terminus: D-aminoacyl-tRNA deacylase (147 aa).

A Gly-cisPro motif, important for rejection of L-amino acids motif is present at residues 139–140 (GP).

Belongs to the DTD family. In terms of assembly, homodimer.

The protein resides in the cytoplasm. It carries out the reaction glycyl-tRNA(Ala) + H2O = tRNA(Ala) + glycine + H(+). It catalyses the reaction a D-aminoacyl-tRNA + H2O = a tRNA + a D-alpha-amino acid + H(+). Functionally, an aminoacyl-tRNA editing enzyme that deacylates mischarged D-aminoacyl-tRNAs. Also deacylates mischarged glycyl-tRNA(Ala), protecting cells against glycine mischarging by AlaRS. Acts via tRNA-based rather than protein-based catalysis; rejects L-amino acids rather than detecting D-amino acids in the active site. By recycling D-aminoacyl-tRNA to D-amino acids and free tRNA molecules, this enzyme counteracts the toxicity associated with the formation of D-aminoacyl-tRNA entities in vivo and helps enforce protein L-homochirality. The protein is D-aminoacyl-tRNA deacylase of Rippkaea orientalis (strain PCC 8801 / RF-1) (Cyanothece sp. (strain PCC 8801)).